The primary structure comprises 498 residues: Probable global transactivator (498 aa).

Residues Arg43 to Arg206 enclose the Helicase ATP-binding domain. Ala55–Thr63 lines the ATP pocket. The short motif at Asp157–His160 is the DEAH box element. The 157-residue stretch at Glu337–Lys493 folds into the Helicase C-terminal domain.

Belongs to the SNF2/RAD54 helicase family.

The chain is Probable global transactivator (GTA) from Orgyia pseudotsugata (Douglas-fir tussock moth).